The primary structure comprises 100 residues: Elastin (100 aa).

A 4-hydroxyproline mark is found at Pro72 and Pro86. Cysteines 90 and 95 form a disulfide.

Belongs to the elastin family. In terms of assembly, the polymeric elastin chains are cross-linked together into an extensible 3D network. Forms a ternary complex with BGN and MFAP2. Interacts with MFAP2 via divalent cations (calcium &gt; magnesium &gt; manganese) in a dose-dependent and saturating manner. Interacts with FBLN5 and FBN1. Forms a ternary complex with FBN1 and FBLN2 or FBLN5. Interacts with MFAP4 in a Ca (2+)-dependent manner; this interaction promotes ELN self-assembly. Interacts with EFEMP2 with moderate affinity. In terms of processing, elastin is formed through the cross-linking of its soluble precursor tropoelastin. Cross-linking is initiated through the action of lysyl oxidase on exposed lysines to form allysine. Subsequent spontaneous condensation reactions with other allysine or unmodified lysine residues result in various bi-, tri-, and tetrafunctional cross-links. The most abundant cross-links in mature elastin fibers are lysinonorleucine, allysine aldol, desmosine, and isodesmosine. Post-translationally, hydroxylation on proline residues within the sequence motif, GXPG, is most likely to be 4-hydroxy as this fits the requirement for 4-hydroxylation in vertebrates.

It localises to the secreted. The protein localises to the extracellular space. It is found in the extracellular matrix. In terms of biological role, major structural protein of tissues such as aorta and nuchal ligament, which must expand rapidly and recover completely. Molecular determinant of the late arterial morphogenesis, stabilizing arterial structure by regulating proliferation and organization of vascular smooth muscle. This Ovis aries (Sheep) protein is Elastin (ELN).